The chain runs to 458 residues: DNA repair protein RadA (458 aa).

Residues 11 to 28 (CNDCGAEFSRWQGQCSAC) form a C4-type zinc finger. 100 to 107 (GHPGAGKS) contacts ATP. The RadA KNRFG motif motif lies at 256-260 (KNRFG). Residues 355–458 (DVFVNVVGGV…TDALAVLDNL (104 aa)) are lon-protease-like.

It belongs to the RecA family. RadA subfamily.

In terms of biological role, DNA-dependent ATPase involved in processing of recombination intermediates, plays a role in repairing DNA breaks. Stimulates the branch migration of RecA-mediated strand transfer reactions, allowing the 3' invading strand to extend heteroduplex DNA faster. Binds ssDNA in the presence of ADP but not other nucleotides, has ATPase activity that is stimulated by ssDNA and various branched DNA structures, but inhibited by SSB. Does not have RecA's homology-searching function. The sequence is that of DNA repair protein RadA from Haemophilus influenzae (strain ATCC 51907 / DSM 11121 / KW20 / Rd).